A 497-amino-acid polypeptide reads, in one-letter code: 3-octaprenyl-4-hydroxybenzoate carboxy-lyase (497 aa).

Asn-175 provides a ligand contact to Mn(2+). Prenylated FMN is bound by residues 178–180, 192–194, and 197–198; these read IYR, RWL, and RG. Residue Glu-241 participates in Mn(2+) binding. The active-site Proton donor is Asp-290.

Belongs to the UbiD family. Homohexamer. It depends on prenylated FMN as a cofactor. The cofactor is Mn(2+).

The protein resides in the cell membrane. The enzyme catalyses a 4-hydroxy-3-(all-trans-polyprenyl)benzoate + H(+) = a 2-(all-trans-polyprenyl)phenol + CO2. It participates in cofactor biosynthesis; ubiquinone biosynthesis. Functionally, catalyzes the decarboxylation of 3-octaprenyl-4-hydroxy benzoate to 2-octaprenylphenol, an intermediate step in ubiquinone biosynthesis. The sequence is that of 3-octaprenyl-4-hydroxybenzoate carboxy-lyase from Escherichia coli O157:H7.